The following is a 234-amino-acid chain: Large ribosomal subunit protein eL6 (234 aa).

This sequence belongs to the eukaryotic ribosomal protein eL6 family.

The protein is Large ribosomal subunit protein eL6 (RPL6) of Mesembryanthemum crystallinum (Common ice plant).